A 263-amino-acid chain; its full sequence is Tryptophan synthase alpha chain (263 aa).

Residues Glu-49 and Asp-60 each act as proton acceptor in the active site.

Belongs to the TrpA family. As to quaternary structure, tetramer of two alpha and two beta chains.

The enzyme catalyses (1S,2R)-1-C-(indol-3-yl)glycerol 3-phosphate + L-serine = D-glyceraldehyde 3-phosphate + L-tryptophan + H2O. It participates in amino-acid biosynthesis; L-tryptophan biosynthesis; L-tryptophan from chorismate: step 5/5. The alpha subunit is responsible for the aldol cleavage of indoleglycerol phosphate to indole and glyceraldehyde 3-phosphate. This chain is Tryptophan synthase alpha chain, found in Cereibacter sphaeroides (strain ATCC 17029 / ATH 2.4.9) (Rhodobacter sphaeroides).